The primary structure comprises 306 residues: UDP-N-acetylenolpyruvoylglucosamine reductase (306 aa).

The FAD-binding PCMH-type domain occupies 29–193 (RVGGPADWLF…IRASLRGTPD (165 aa)). The active site involves arginine 173. Serine 222 acts as the Proton donor in catalysis. The active site involves glutamate 292.

Belongs to the MurB family. FAD is required as a cofactor.

The protein resides in the cytoplasm. It catalyses the reaction UDP-N-acetyl-alpha-D-muramate + NADP(+) = UDP-N-acetyl-3-O-(1-carboxyvinyl)-alpha-D-glucosamine + NADPH + H(+). It participates in cell wall biogenesis; peptidoglycan biosynthesis. Its function is as follows. Cell wall formation. The protein is UDP-N-acetylenolpyruvoylglucosamine reductase of Gluconobacter oxydans (strain 621H) (Gluconobacter suboxydans).